The following is a 981-amino-acid chain: Ephrin type-A receptor 3 (981 aa).

Residues 1 to 20 (MALFRIYSFLAPFHILVLCQ) form the signal peptide. Residues 21–545 (ALRNYPDNEV…LAVGDPNQQT (525 aa)) are Extracellular-facing. Residues 29–210 (EVTLLDSMSA…FYKRCPLAVL (182 aa)) form the Eph LBD domain. 2 Fibronectin type-III domains span residues 328 to 441 (PPSA…TSQT) and 442 to 533 (VSVI…TSHE). N-linked (GlcNAc...) asparagine glycans are attached at residues N340, N410, N435, and N485. A helical membrane pass occupies residues 546–566 (ILAISVAGGAVLLVLLVACFI). At 567-981 (VSGRRCGYIK…QAHHGTQVQV (415 aa)) the chain is on the cytoplasmic side. Phosphotyrosine; by autocatalysis is present on residues Y601 and Y607. The region spanning 626–887 (IRIERVIGAG…QIVNTLDRLI (262 aa)) is the Protein kinase domain. Residues 633-638 (GAGEFG), K658, and 705-711 (EYMENGS) contribute to the ATP site. A Phosphotyrosine; by autocatalysis modification is found at Y706. The Proton acceptor role is filled by D751. Position 755–756 (755–756 (RN)) interacts with ATP. Residues Y784 and Y927 each carry the phosphotyrosine; by autocatalysis modification. Residues 910 to 974 (AAVNTVEDWL…LSSIQCLQAH (65 aa)) enclose the SAM domain. The PDZ-binding motif lies at 979–981 (VQV).

This sequence belongs to the protein kinase superfamily. Tyr protein kinase family. Ephrin receptor subfamily. Heterotetramer upon binding of the ligand. The heterotetramer is composed of an ephrin dimer and a receptor dimer. Oligomerization is probably required to induce biological responses. Autophosphorylates upon activation by efna5. As to expression, widely expressed in the developing zebrafish nervous system.

The protein resides in the cell membrane. The catalysed reaction is L-tyrosyl-[protein] + ATP = O-phospho-L-tyrosyl-[protein] + ADP + H(+). Functionally, receptor tyrosine kinase which binds promiscuously membrane-bound ephrin family ligands residing on adjacent cells, leading to contact-dependent bidirectional signaling into neighboring cells. The signaling pathway downstream of the receptor is referred to as forward signaling while the signaling pathway downstream of the ephrin ligand is referred to as reverse signaling. Highly promiscuous for ephrin-A ligands it binds preferentially efna5. Upon activation by efna5 regulates cell-cell adhesion, cytoskeletal organization and cell migration. Plays a role in cardiac cells migration and differentiation probably through activation by efna1. Involved in the retinotectal mapping of neurons. May also control the segregation but not the guidance of motor and sensory axons during neuromuscular circuit development. In Danio rerio (Zebrafish), this protein is Ephrin type-A receptor 3 (epha3).